Here is a 248-residue protein sequence, read N- to C-terminus: Phosphoribosylaminoimidazole-succinocarboxamide synthase (248 aa).

It belongs to the SAICAR synthetase family.

It catalyses the reaction 5-amino-1-(5-phospho-D-ribosyl)imidazole-4-carboxylate + L-aspartate + ATP = (2S)-2-[5-amino-1-(5-phospho-beta-D-ribosyl)imidazole-4-carboxamido]succinate + ADP + phosphate + 2 H(+). Its pathway is purine metabolism; IMP biosynthesis via de novo pathway; 5-amino-1-(5-phospho-D-ribosyl)imidazole-4-carboxamide from 5-amino-1-(5-phospho-D-ribosyl)imidazole-4-carboxylate: step 1/2. This is Phosphoribosylaminoimidazole-succinocarboxamide synthase (purC) from Methanothermobacter thermautotrophicus (strain ATCC 29096 / DSM 1053 / JCM 10044 / NBRC 100330 / Delta H) (Methanobacterium thermoautotrophicum).